The chain runs to 761 residues: Zinc finger protein 711 (761 aa).

5 C2H2-type zinc fingers span residues Tyr-383–His-408, Tyr-414–His-436, His-476–His-499, His-505–His-527, and Phe-533–His-556. Residues Phe-562–Phe-584 form a C2H2-type 6; atypical zinc finger. Residues Cys-564, Cys-567, and His-580 each coordinate Zn(2+). 6 consecutive C2H2-type zinc fingers follow at residues His-590 to His-613, His-619 to His-641, His-647 to His-670, Phe-676 to His-698, Tyr-704 to His-727, and His-733 to His-755.

The protein belongs to the krueppel C2H2-type zinc-finger protein family. As to expression, present in ovary and brain but not in other tissues (at protein level).

It is found in the nucleus. The protein localises to the cytoplasm. In terms of biological role, transcription regulator required for brain development. Probably acts as a transcription factor that binds to the promoter of target genes, leading to activate their expression. This is Zinc finger protein 711 (znf711) from Danio rerio (Zebrafish).